We begin with the raw amino-acid sequence, 321 residues long: Ribose-phosphate pyrophosphokinase (321 aa).

Residues 39–41 (DGE) and 98–99 (RQ) contribute to the ATP site. Mg(2+) contacts are provided by His-132 and Asp-170. The active site involves Lys-195. D-ribose 5-phosphate is bound by residues Arg-197, Asp-221, and 225 to 229 (DTGGT).

Belongs to the ribose-phosphate pyrophosphokinase family. Class I subfamily. Homohexamer. It depends on Mg(2+) as a cofactor.

The protein localises to the cytoplasm. The catalysed reaction is D-ribose 5-phosphate + ATP = 5-phospho-alpha-D-ribose 1-diphosphate + AMP + H(+). Its pathway is metabolic intermediate biosynthesis; 5-phospho-alpha-D-ribose 1-diphosphate biosynthesis; 5-phospho-alpha-D-ribose 1-diphosphate from D-ribose 5-phosphate (route I): step 1/1. In terms of biological role, involved in the biosynthesis of the central metabolite phospho-alpha-D-ribosyl-1-pyrophosphate (PRPP) via the transfer of pyrophosphoryl group from ATP to 1-hydroxyl of ribose-5-phosphate (Rib-5-P). In Mycoplasmopsis pulmonis (strain UAB CTIP) (Mycoplasma pulmonis), this protein is Ribose-phosphate pyrophosphokinase.